The following is a 578-amino-acid chain: Lysine--tRNA ligase (578 aa).

2 residues coordinate Mg(2+): E414 and E421.

Belongs to the class-II aminoacyl-tRNA synthetase family. In terms of assembly, homodimer. Mg(2+) is required as a cofactor.

The protein localises to the cytoplasm. It catalyses the reaction tRNA(Lys) + L-lysine + ATP = L-lysyl-tRNA(Lys) + AMP + diphosphate. The sequence is that of Lysine--tRNA ligase from Porphyromonas gingivalis (strain ATCC BAA-308 / W83).